Here is an 83-residue protein sequence, read N- to C-terminus: RNA-binding protein Hfq (83 aa).

Positions 9 to 68 constitute a Sm domain; the sequence is DPYLNALRKERIPVSIFLVNGIKLQGQIESFDQFVILLKNTVSQMVYKHAISTVVPARNV.

It belongs to the Hfq family. As to quaternary structure, homohexamer.

Functionally, RNA chaperone that binds small regulatory RNA (sRNAs) and mRNAs to facilitate mRNA translational regulation in response to envelope stress, environmental stress and changes in metabolite concentrations. Also binds with high specificity to tRNAs. The polypeptide is RNA-binding protein Hfq (Marinobacter nauticus (strain ATCC 700491 / DSM 11845 / VT8) (Marinobacter aquaeolei)).